A 429-amino-acid chain; its full sequence is Phosphoribosylamine--glycine ligase (429 aa).

In terms of domain architecture, ATP-grasp spans 109-316 (KDFLARHNIP…LVELCLAACE (208 aa)). 135 to 196 (LREKGAPIVI…EEFLDGEEAS (62 aa)) lines the ATP pocket. The interval 212 to 236 (SQDHKRVGDKDTGPNTGGMGAYSPA) is disordered. Basic and acidic residues predominate over residues 213–223 (QDHKRVGDKDT). Mg(2+) is bound by residues Glu-286 and Asn-288.

The protein belongs to the GARS family. Monomer. Mg(2+) serves as cofactor. It depends on Mn(2+) as a cofactor.

It carries out the reaction 5-phospho-beta-D-ribosylamine + glycine + ATP = N(1)-(5-phospho-beta-D-ribosyl)glycinamide + ADP + phosphate + H(+). It functions in the pathway purine metabolism; IMP biosynthesis via de novo pathway; N(1)-(5-phospho-D-ribosyl)glycinamide from 5-phospho-alpha-D-ribose 1-diphosphate: step 2/2. This chain is Phosphoribosylamine--glycine ligase, found in Escherichia coli O6:H1 (strain CFT073 / ATCC 700928 / UPEC).